Consider the following 40-residue polypeptide: Photosystem II reaction center protein J (40 aa).

Residues 8–28 (IPLWLIGTVTGIPVIGSMGIF) form a helical membrane-spanning segment.

This sequence belongs to the PsbJ family. PSII is composed of 1 copy each of membrane proteins PsbA, PsbB, PsbC, PsbD, PsbE, PsbF, PsbH, PsbI, PsbJ, PsbK, PsbL, PsbM, PsbT, PsbX, PsbY, PsbZ, Psb30/Ycf12, at least 3 peripheral proteins of the oxygen-evolving complex and a large number of cofactors. It forms dimeric complexes.

It is found in the plastid. Its subcellular location is the chloroplast thylakoid membrane. Its function is as follows. One of the components of the core complex of photosystem II (PSII). PSII is a light-driven water:plastoquinone oxidoreductase that uses light energy to abstract electrons from H(2)O, generating O(2) and a proton gradient subsequently used for ATP formation. It consists of a core antenna complex that captures photons, and an electron transfer chain that converts photonic excitation into a charge separation. This is Photosystem II reaction center protein J from Illicium oligandrum (Star anise).